A 290-amino-acid chain; its full sequence is Feruloyl esterase D (290 aa).

The signal sequence occupies residues 1–25; the sequence is MAGLHSRLTTFLLLLLSALPAIAAA. The disordered stretch occupies residues 260 to 280; it reads HGGDHNPSQRDPGQNDPFAPR.

The protein belongs to the serine esterase family.

Its subcellular location is the secreted. The catalysed reaction is feruloyl-polysaccharide + H2O = ferulate + polysaccharide.. Its function is as follows. Involved in degradation of plant cell walls. Hydrolyzes the feruloyl-arabinose ester bond in arabinoxylans as well as the feruloyl-galactose and feruloyl-arabinose ester bonds in pectin. Active against methyl esters of ferulate (MFA), sinapate (MSA), caffeate (MCA) and p-coumarate (MpCA). This chain is Feruloyl esterase D, found in Neurospora crassa (strain ATCC 24698 / 74-OR23-1A / CBS 708.71 / DSM 1257 / FGSC 987).